Here is a 282-residue protein sequence, read N- to C-terminus: Protoheme IX farnesyltransferase (282 aa).

Helical transmembrane passes span 9-29 (LAKP…FLLA), 39-59 (LPLF…GCVF), 79-99 (LVTG…LLIL), 102-122 (LVLY…GFIV), 139-159 (VLGG…VVNI), 165-185 (LALF…IAML), 210-230 (IMLF…VLGS), 231-251 (ADLF…YKSI), and 261-281 (VFAK…CLTM).

The protein belongs to the UbiA prenyltransferase family. Protoheme IX farnesyltransferase subfamily.

Its subcellular location is the cell inner membrane. It catalyses the reaction heme b + (2E,6E)-farnesyl diphosphate + H2O = Fe(II)-heme o + diphosphate. It participates in porphyrin-containing compound metabolism; heme O biosynthesis; heme O from protoheme: step 1/1. Functionally, converts heme B (protoheme IX) to heme O by substitution of the vinyl group on carbon 2 of heme B porphyrin ring with a hydroxyethyl farnesyl side group. The sequence is that of Protoheme IX farnesyltransferase from Francisella tularensis subsp. holarctica (strain FTNF002-00 / FTA).